The chain runs to 686 residues: Rhophilin-2 (686 aa).

The REM-1 domain maps to Asn26–Val100. Residues Gln46–Asn66 are interaction with Rho. The region spanning Pro111–Leu502 is the BRO1 domain. Residues Arg515–Leu593 form the PDZ domain. Thr655 carries the post-translational modification Phosphothreonine.

The protein belongs to the RHPN family. As to quaternary structure, interacts with GTP-bound RhoA and RhoB. Interacts with both GTP- and GDP-bound RhoA. Interacts with KRT18.

The protein resides in the cytoplasm. It is found in the perinuclear region. Its function is as follows. Binds specifically to GTP-Rho. May function in a Rho pathway to limit stress fiber formation and/or increase the turnover of F-actin structures in the absence of high levels of RhoA activity. This chain is Rhophilin-2 (Rhpn2), found in Mus musculus (Mouse).